The chain runs to 151 residues: Ribosomal RNA large subunit methyltransferase H (151 aa).

S-adenosyl-L-methionine contacts are provided by residues Ala-101 and 119 to 124; that span reads LSEMTF.

Belongs to the RNA methyltransferase RlmH family. As to quaternary structure, homodimer.

Its subcellular location is the cytoplasm. The enzyme catalyses pseudouridine(1915) in 23S rRNA + S-adenosyl-L-methionine = N(3)-methylpseudouridine(1915) in 23S rRNA + S-adenosyl-L-homocysteine + H(+). Its function is as follows. Specifically methylates the pseudouridine at position 1915 (m3Psi1915) in 23S rRNA. This chain is Ribosomal RNA large subunit methyltransferase H, found in Helicobacter pylori (strain G27).